A 397-amino-acid chain; its full sequence is Phosphoglycerate kinase (397 aa).

Residues 21–23 (DFN), arginine 37, 60–63 (HLGR), arginine 119, and arginine 152 contribute to the substrate site. Residues lysine 203, glycine 294, glutamate 325, and 354-357 (GGDS) contribute to the ATP site.

Belongs to the phosphoglycerate kinase family. As to quaternary structure, monomer.

The protein localises to the cytoplasm. It carries out the reaction (2R)-3-phosphoglycerate + ATP = (2R)-3-phospho-glyceroyl phosphate + ADP. The protein operates within carbohydrate degradation; glycolysis; pyruvate from D-glyceraldehyde 3-phosphate: step 2/5. The chain is Phosphoglycerate kinase from Chlorobaculum tepidum (strain ATCC 49652 / DSM 12025 / NBRC 103806 / TLS) (Chlorobium tepidum).